The chain runs to 339 residues: tRNA dimethylallyltransferase (339 aa).

An ATP-binding site is contributed by 33–40 (GPTASGKT). 35–40 (TASGKT) is a substrate binding site. Interaction with substrate tRNA stretches follow at residues 58–61 (DSLL) and 182–186 (QRIQR).

The protein belongs to the IPP transferase family. In terms of assembly, monomer. Mg(2+) serves as cofactor.

The catalysed reaction is adenosine(37) in tRNA + dimethylallyl diphosphate = N(6)-dimethylallyladenosine(37) in tRNA + diphosphate. In terms of biological role, catalyzes the transfer of a dimethylallyl group onto the adenine at position 37 in tRNAs that read codons beginning with uridine, leading to the formation of N6-(dimethylallyl)adenosine (i(6)A). The chain is tRNA dimethylallyltransferase from Acidithiobacillus ferrooxidans (strain ATCC 23270 / DSM 14882 / CIP 104768 / NCIMB 8455) (Ferrobacillus ferrooxidans (strain ATCC 23270)).